The primary structure comprises 356 residues: Phosphoribosylformylglycinamidine cyclo-ligase (356 aa).

It belongs to the AIR synthase family.

The protein resides in the cytoplasm. It carries out the reaction 2-formamido-N(1)-(5-O-phospho-beta-D-ribosyl)acetamidine + ATP = 5-amino-1-(5-phospho-beta-D-ribosyl)imidazole + ADP + phosphate + H(+). It functions in the pathway purine metabolism; IMP biosynthesis via de novo pathway; 5-amino-1-(5-phospho-D-ribosyl)imidazole from N(2)-formyl-N(1)-(5-phospho-D-ribosyl)glycinamide: step 2/2. The sequence is that of Phosphoribosylformylglycinamidine cyclo-ligase from Acinetobacter baumannii (strain AB307-0294).